Reading from the N-terminus, the 315-residue chain is HVA22-like protein h (315 aa).

The disordered stretch occupies residues 148 to 315 (PKPKPKEKKQ…RKARSAGAPR (168 aa)). Residues 173-190 (ATSQAASSNPQVRLQSKK) are compositionally biased toward polar residues. The segment covering 234–248 (PPGPPPPPPPPPPSP) has biased composition (pro residues).

It belongs to the DP1 family.

The chain is HVA22-like protein h (HVA22H) from Arabidopsis thaliana (Mouse-ear cress).